A 163-amino-acid chain; its full sequence is Photosystem II extrinsic protein V (163 aa).

The first 26 residues, 1-26, serve as a signal peptide directing secretion; sequence MLKRSSWLATLLGLLTVASVSTIVYA. Cys-63, Cys-66, His-67, and His-118 together coordinate heme c.

Belongs to the cytochrome c family. PsbV subfamily. As to quaternary structure, PSII is composed of 1 copy each of membrane proteins PsbA, PsbB, PsbC, PsbD, PsbE, PsbF, PsbH, PsbI, PsbJ, PsbK, PsbL, PsbM, PsbT, PsbY, PsbZ, Psb30/Ycf12, at least 3 peripheral proteins of the oxygen-evolving complex and a large number of cofactors. It forms dimeric complexes. The extrinsic subunits in red algae are PsbO (OEC33), PsbQ', cytochrome c-550 and PsbU. Requires heme c as cofactor.

It localises to the plastid. It is found in the chloroplast thylakoid membrane. Functionally, one of the extrinsic, lumenal subunits of photosystem II (PSII). PSII is a light-driven water plastoquinone oxidoreductase, using light energy to abstract electrons from H(2)O, generating a proton gradient subsequently used for ATP formation. The extrinsic proteins stabilize the structure of photosystem II oxygen-evolving complex (OEC), the ion environment of oxygen evolution and protect the OEC against heat-induced inactivation. This chain is Photosystem II extrinsic protein V, found in Porphyra purpurea (Red seaweed).